The following is a 143-amino-acid chain: Succinate dehydrogenase assembly factor 2, mitochondrial (143 aa).

Belongs to the SDHAF2 family. Interacts with the flavoprotein subunit within the SDH catalytic dimer.

It localises to the mitochondrion matrix. Functionally, plays an essential role in the assembly of succinate dehydrogenase (SDH), an enzyme complex (also referred to as respiratory complex II) that is a component of both the tricarboxylic acid (TCA) cycle and the mitochondrial electron transport chain, and which couples the oxidation of succinate to fumarate with the reduction of ubiquinone (coenzyme Q) to ubiquinol. Required for flavinylation (covalent attachment of FAD) of the flavoprotein subunit of the SDH catalytic dimer. This Schizosaccharomyces japonicus (strain yFS275 / FY16936) (Fission yeast) protein is Succinate dehydrogenase assembly factor 2, mitochondrial.